We begin with the raw amino-acid sequence, 66 residues long: uncharacterized protein (66 aa).

Helical transmembrane passes span 3-23 and 34-54; these read LIHV…PFAN and FILA…AIVY.

It localises to the cell membrane. This is an uncharacterized protein from Bacillus subtilis (strain 168).